The following is a 140-amino-acid chain: DegV domain-containing 15.5 kDa protein (140 aa).

A DegV domain is found at 4–140 (QIIVTDSTSD…ELVLLQSKKI (137 aa)). Residues Thr61 and Ser93 each coordinate hexadecanoate.

In terms of biological role, may bind long-chain fatty acids, such as palmitate, and may play a role in lipid transport or fatty acid metabolism. The sequence is that of DegV domain-containing 15.5 kDa protein from Staphylococcus aureus.